The primary structure comprises 303 residues: Protoheme IX farnesyltransferase 1 (303 aa).

The next 9 membrane-spanning stretches (helical) occupy residues 18–38 (PGIIMGNLISVAGGFLLAAQG), 42–62 (LTLMFATMIGLSLVVASGCAV), 91–111 (AVLSFGIGLGIIGFAMLAIFT), 114–134 (LAVLFAAIGYVVYVGVYSLYM), 139–159 (VYGTLVGSFSGAVPPVVGYCA), 169–189 (VILLLMFSLWQMPHSYAIAIF), 213–233 (LHIVLYIAVFAVVSALLPLAG), 235–255 (TGIAFMAVTFATSLWWLAMAL), and 274–294 (FSIITITALSVTMALDFQVVA).

Belongs to the UbiA prenyltransferase family. Protoheme IX farnesyltransferase subfamily.

The protein resides in the cell inner membrane. The catalysed reaction is heme b + (2E,6E)-farnesyl diphosphate + H2O = Fe(II)-heme o + diphosphate. Its pathway is porphyrin-containing compound metabolism; heme O biosynthesis; heme O from protoheme: step 1/1. Its function is as follows. Converts heme B (protoheme IX) to heme O by substitution of the vinyl group on carbon 2 of heme B porphyrin ring with a hydroxyethyl farnesyl side group. This Shewanella frigidimarina (strain NCIMB 400) protein is Protoheme IX farnesyltransferase 1.